The primary structure comprises 298 residues: GTPase Era (298 aa).

The Era-type G domain occupies 3–170; the sequence is KSGFVAILGR…VQLLKDNLEE (168 aa). The interval 11–18 is G1; the sequence is GRPNVGKS. Residue 11 to 18 coordinates GTP; sequence GRPNVGKS. The tract at residues 37–41 is G2; sequence QSTRN. The G3 stretch occupies residues 58–61; it reads DTPG. Residues 58 to 62 and 120 to 123 contribute to the GTP site; these read DTPGI and NKID. Residues 120-123 form a G4 region; it reads NKID. The segment at 149–151 is G5; sequence ISA. A KH type-2 domain is found at 201–279; the sequence is TQQEVPHSVA…YLETWVKVKK (79 aa).

The protein belongs to the TRAFAC class TrmE-Era-EngA-EngB-Septin-like GTPase superfamily. Era GTPase family. Monomer.

The protein localises to the cytoplasm. Its subcellular location is the cell membrane. Functionally, an essential GTPase that binds both GDP and GTP, with rapid nucleotide exchange. Plays a role in 16S rRNA processing and 30S ribosomal subunit biogenesis and possibly also in cell cycle regulation and energy metabolism. In Streptococcus equi subsp. zooepidemicus (strain H70), this protein is GTPase Era.